The sequence spans 226 residues: UPF0177 protein YbdJ (226 aa).

5 helical membrane-spanning segments follow: residues 16–36 (LLLLLVTVILYNGWTPHLGIF), 43–63 (FAFNYYGFVDILTFLVIIVIA), 81–101 (LLFILFFIVGGNIFIALAHHL), 169–189 (FAWVHTGFTYSFFLYLPISLV), and 206–226 (LHSSINLINTYLPNLLSFWVF).

It belongs to the UPF0177 family.

It is found in the cell membrane. This chain is UPF0177 protein YbdJ (ybdJ), found in Lactococcus lactis subsp. lactis (strain IL1403) (Streptococcus lactis).